The following is a 241-amino-acid chain: Large ribosomal subunit protein uL3 (241 aa).

2 disordered regions span residues 140 to 162 (SHRS…NKKM) and 217 to 241 (PLPG…EETA). Gln151 is modified (N5-methylglutamine). Positions 229–241 (APATEAPAAEETA) are enriched in low complexity.

Belongs to the universal ribosomal protein uL3 family. As to quaternary structure, part of the 50S ribosomal subunit. Forms a cluster with proteins L14 and L19. In terms of processing, methylated by PrmB.

Functionally, one of the primary rRNA binding proteins, it binds directly near the 3'-end of the 23S rRNA, where it nucleates assembly of the 50S subunit. The polypeptide is Large ribosomal subunit protein uL3 (Methylobacterium radiotolerans (strain ATCC 27329 / DSM 1819 / JCM 2831 / NBRC 15690 / NCIMB 10815 / 0-1)).